The primary structure comprises 441 residues: DNA double-strand break repair protein Mre11 (441 aa).

D9, H11, D50, and N85 together coordinate Mn(2+). H86 serves as the catalytic Proton donor. H150, D181, and H183 together coordinate Mn(2+). The interval 360–441 (ESLLSDDPDA…SRDSSLGDFA (82 aa)) is disordered. Composition is skewed to acidic residues over residues 379 to 403 (AEAE…EDTA) and 411 to 425 (TDTD…DSET).

It belongs to the MRE11/RAD32 family. As to quaternary structure, homodimer. Forms a heterotetramer composed of two Mre11 subunits and two Rad50 subunits. Mn(2+) serves as cofactor.

With respect to regulation, nuclease activity is regulated by Rad50. Part of the Rad50/Mre11 complex, which is involved in the early steps of DNA double-strand break (DSB) repair. Mre11 binds to DSB ends and has both double-stranded 3'-5' exonuclease activity and single-stranded endonuclease activity. In polyploid organisms, the Rad50/Mre11 complex appears to restrain the repair of double-strand breaks by homologous recombination, allowing another pathway to act as the primary mode of repair. In Haloferax volcanii (strain ATCC 29605 / DSM 3757 / JCM 8879 / NBRC 14742 / NCIMB 2012 / VKM B-1768 / DS2) (Halobacterium volcanii), this protein is DNA double-strand break repair protein Mre11.